Reading from the N-terminus, the 443-residue chain is Xaa-Pro dipeptidase (443 aa).

Residues Asp246, Asp257, His339, Glu384, and Glu423 each coordinate Mn(2+).

This sequence belongs to the peptidase M24B family. Bacterial-type prolidase subfamily. Mn(2+) serves as cofactor.

It catalyses the reaction Xaa-L-Pro dipeptide + H2O = an L-alpha-amino acid + L-proline. Its function is as follows. Splits dipeptides with a prolyl residue in the C-terminal position. This chain is Xaa-Pro dipeptidase, found in Yersinia pestis bv. Antiqua (strain Nepal516).